The chain runs to 463 residues: Hydrolase pyiE (463 aa).

Ser252 serves as the catalytic Nucleophile. The disordered stretch occupies residues 350–373 (KSDGSRANGKKSHSPTDGGGVESD).

The protein belongs to the AB hydrolase superfamily. FUS2 hydrolase family. As to quaternary structure, homodimer.

It functions in the pathway mycotoxin biosynthesis. Hydrolyase; part of the gene cluster that mediates the biosynthesis of the mycotoxin pyrichalasin H, a tyrosine-derived cytochalasan that inhibits the growth of rice seedlings, but also inhibits lymphocyte capping and actin polymerization and alters cell morphology. Pyrichalasin H is indicated as the responsible agent for the genus-specific pathogenicity of M.grisea toward crabgrass. The first step in the pathway is catalyzed by the O-methyltransferase pyiA which methylates free tyrosine to generate the precursor O-methyltyrosine. The hybrid PKS-NRPS pyiS, assisted by the enoyl reductase pyiC, are responsible for fusion of the O-methyltyrosine precursor and the polyketide backbone. The polyketide synthase module (PKS) of pyiS is responsible for the synthesis of the polyketide backbone and the downstream nonribosomal peptide synthetase (NRPS) amidates the carboxyl end of the polyketide with the O-methyltyrosine precursor. As the NRPS A-domain demonstrates substrate tolerance, pyiS can also use phenylalanine, tyrosine and even para-chlorophenylalanine as amino acid precursor, which leads to the production of novel cytochalasans, including halogenated cytochalasans. Because pyiS lacks a designated enoylreductase (ER) domain, the required activity is provided the enoyl reductase pyiC. Reduction by the hydrolyase pyiE leads to 1,5-dihydropyrrolone, which is substrate for dehydration and intra-molecular Diels-Alder cyclization by the Diels-Alderase pyiF to yield the required isoindolone-fused macrocycle. The tailoring cytochrome P450 monooxygenases piyD and piyG catalyze the hydroxylation at C-18 and C-7, respectivily, whereas the short-chain dehydrogenase/reductase pyiH reduces the carbonyl at C-21 in preparation for the transfer of an acetyl group by the acetyltransferase pyiB. These 3 reactions whose order is not clear yet, lead to the production of O-methylpyrichalasin J, a deacetylated pyrichalasin H. Finally, pyiB to converts O-methylpyrichalasin J into the final product pyrichalasin H via acetylation of C-21. The polypeptide is Hydrolase pyiE (Pyricularia grisea (Crabgrass-specific blast fungus)).